The primary structure comprises 225 residues: Ribonuclease 3 (225 aa).

One can recognise an RNase III domain in the interval 7-129 (LPRLGRILGY…IIGAIYLDAD (123 aa)). A Mg(2+)-binding site is contributed by Glu42. The active site involves Asp46. Mg(2+)-binding residues include Asp115 and Glu118. Glu118 is an active-site residue. Positions 155 to 225 (DPKTLLQEHL…AAEVLERIKK (71 aa)) constitute a DRBM domain.

It belongs to the ribonuclease III family. Homodimer. The cofactor is Mg(2+).

Its subcellular location is the cytoplasm. It carries out the reaction Endonucleolytic cleavage to 5'-phosphomonoester.. In terms of biological role, digests double-stranded RNA. Involved in the processing of primary rRNA transcript to yield the immediate precursors to the large and small rRNAs (23S and 16S). Processes some mRNAs, and tRNAs when they are encoded in the rRNA operon. Processes pre-crRNA and tracrRNA of type II CRISPR loci if present in the organism. The polypeptide is Ribonuclease 3 (Shewanella loihica (strain ATCC BAA-1088 / PV-4)).